A 445-amino-acid chain; its full sequence is Argininosuccinate synthase (445 aa).

ATP-binding positions include 17-25 and Ala-43; that span reads AFSGGLDTS. Tyr-99 serves as a coordination point for L-citrulline. Residues Gly-129 and Thr-131 each coordinate ATP. Positions 131, 135, and 136 each coordinate L-aspartate. An L-citrulline-binding site is contributed by Asn-135. An ATP-binding site is contributed by Asp-136. L-citrulline is bound by residues Arg-139 and Ser-192. Asp-194 is a binding site for ATP. Positions 201, 203, and 280 each coordinate L-citrulline.

It belongs to the argininosuccinate synthase family. Type 2 subfamily. As to quaternary structure, homotetramer.

The protein resides in the cytoplasm. The enzyme catalyses L-citrulline + L-aspartate + ATP = 2-(N(omega)-L-arginino)succinate + AMP + diphosphate + H(+). It functions in the pathway amino-acid biosynthesis; L-arginine biosynthesis; L-arginine from L-ornithine and carbamoyl phosphate: step 2/3. This is Argininosuccinate synthase from Rhodopseudomonas palustris (strain BisB5).